Reading from the N-terminus, the 435-residue chain is Legumain (435 aa).

The first 17 residues, 1-17, serve as a signal peptide directing secretion; the sequence is MTWRVAVLLSLVLGAGA. N93 carries N-linked (GlcNAc...) asparagine glycosylation. H150 is an active-site residue. N169 is a glycosylation site (N-linked (GlcNAc...) asparagine). C191 acts as the Nucleophile in catalysis. N265 and N274 each carry an N-linked (GlcNAc...) asparagine glycan. Positions 326 to 435 are excised as a propeptide; sequence DVKESQNLIG…AMDKVCLSHY (110 aa). Cystine bridges form between C380-C414 and C392-C431.

This sequence belongs to the peptidase C13 family. Homodimer before autocatalytic removal of the propeptide. Monomer after autocatalytic processing. May interact with integrins. Glycosylated. In terms of processing, activated by autocatalytic processing at pH 4. In terms of tissue distribution, detected in kidney proximal tubules (at protein level). Ubiquitous. Particularly abundant in kidney and placenta.

Its subcellular location is the lysosome. It carries out the reaction Hydrolysis of proteins and small molecule substrates at -Asn-|-Xaa- bonds.. Inhibited by cystatin-C. Its function is as follows. Has a strict specificity for hydrolysis of asparaginyl bonds. Can also cleave aspartyl bonds slowly, especially under acidic conditions. Involved in the processing of proteins for MHC class II antigen presentation in the lysosomal/endosomal system. Also involved in MHC class I antigen presentation in cross-presenting dendritic cells by mediating cleavage and maturation of Perforin-2 (MPEG1), thereby promoting antigen translocation in the cytosol. Required for normal lysosomal protein degradation in renal proximal tubules. Required for normal degradation of internalized EGFR. Plays a role in the regulation of cell proliferation via its role in EGFR degradation. This chain is Legumain (Lgmn), found in Mus musculus (Mouse).